We begin with the raw amino-acid sequence, 276 residues long: NH(3)-dependent NAD(+) synthetase (276 aa).

43–50 is an ATP binding site; sequence GISGGVDS. D49 lines the Mg(2+) pocket. R146 lines the deamido-NAD(+) pocket. T166 lines the ATP pocket. E171 provides a ligand contact to Mg(2+). K179 and D186 together coordinate deamido-NAD(+). The ATP site is built by K195 and T217. 266-267 is a binding site for deamido-NAD(+); that stretch reads HK.

The protein belongs to the NAD synthetase family. Homodimer.

It carries out the reaction deamido-NAD(+) + NH4(+) + ATP = AMP + diphosphate + NAD(+) + H(+). The protein operates within cofactor biosynthesis; NAD(+) biosynthesis; NAD(+) from deamido-NAD(+) (ammonia route): step 1/1. Its function is as follows. Catalyzes the ATP-dependent amidation of deamido-NAD to form NAD. Uses ammonia as a nitrogen source. This Shewanella woodyi (strain ATCC 51908 / MS32) protein is NH(3)-dependent NAD(+) synthetase.